We begin with the raw amino-acid sequence, 215 residues long: Pyrophosphatase PpaX (215 aa).

The active-site Nucleophile is aspartate 9.

Belongs to the HAD-like hydrolase superfamily. PpaX family. The cofactor is Mg(2+).

It catalyses the reaction diphosphate + H2O = 2 phosphate + H(+). In terms of biological role, hydrolyzes pyrophosphate formed during P-Ser-HPr dephosphorylation by HPrK/P. Might play a role in controlling the intracellular pyrophosphate pool. The sequence is that of Pyrophosphatase PpaX from Anoxybacillus flavithermus (strain DSM 21510 / WK1).